Reading from the N-terminus, the 206-residue chain is Dephospho-CoA kinase (206 aa).

In terms of domain architecture, DPCK spans 4–200 (TVALTGGIGS…ASYLKLASQF (197 aa)). 12 to 17 (GSGKST) is an ATP binding site.

Belongs to the CoaE family.

The protein localises to the cytoplasm. It catalyses the reaction 3'-dephospho-CoA + ATP = ADP + CoA + H(+). The protein operates within cofactor biosynthesis; coenzyme A biosynthesis; CoA from (R)-pantothenate: step 5/5. Functionally, catalyzes the phosphorylation of the 3'-hydroxyl group of dephosphocoenzyme A to form coenzyme A. The chain is Dephospho-CoA kinase from Salmonella choleraesuis (strain SC-B67).